The chain runs to 550 residues: Glucose-6-phosphate isomerase (550 aa).

The Proton donor role is filled by E356. Catalysis depends on residues H387 and K515.

Belongs to the GPI family.

It is found in the cytoplasm. The enzyme catalyses alpha-D-glucose 6-phosphate = beta-D-fructose 6-phosphate. It participates in carbohydrate biosynthesis; gluconeogenesis. The protein operates within carbohydrate degradation; glycolysis; D-glyceraldehyde 3-phosphate and glycerone phosphate from D-glucose: step 2/4. Catalyzes the reversible isomerization of glucose-6-phosphate to fructose-6-phosphate. The sequence is that of Glucose-6-phosphate isomerase from Vibrio cholerae serotype O1 (strain ATCC 39541 / Classical Ogawa 395 / O395).